The following is a 361-amino-acid chain: Large ribosomal subunit protein uL3 (361 aa).

Basic residues predominate over residues methionine 1–arginine 14. Disordered stretches follow at residues methionine 1–arginine 33 and threonine 337–alanine 361.

The protein belongs to the universal ribosomal protein uL3 family. In terms of assembly, part of the 50S ribosomal subunit. Forms a cluster with proteins L14 and L24e.

Its function is as follows. One of the primary rRNA binding proteins, it binds directly near the 3'-end of the 23S rRNA, where it nucleates assembly of the 50S subunit. The sequence is that of Large ribosomal subunit protein uL3 from Methanopyrus kandleri (strain AV19 / DSM 6324 / JCM 9639 / NBRC 100938).